Reading from the N-terminus, the 252-residue chain is Auxin-induced in root cultures protein 12 (252 aa).

Residues 1-25 (MASSSSSLLILAVACFVSLISPAIS) form the signal peptide. One can recognise a DOMON domain in the interval 49–165 (LNSYLHYTYN…DSVNQVWQIG (117 aa)). Residues Asn-58 and Asn-61 are each glycosylated (N-linked (GlcNAc...) asparagine). Met-91 serves as a coordination point for heme. Residues Asn-114 and Asn-167 are each glycosylated (N-linked (GlcNAc...) asparagine). A heme-binding site is contributed by His-176. Residues 193-224 (EDAAPGSAPSPGSAPAPGTSGSTTPGTAAGGP) form a disordered region. The segment covering 195–219 (AAPGSAPSPGSAPAPGTSGSTTPGT) has biased composition (low complexity). Asn-226 carries GPI-anchor amidated asparagine lipidation. A propeptide spans 227–252 (AGSLTRNVNFGVNLGILVLLGSIFIF) (removed in mature form).

It depends on heme as a cofactor.

Its subcellular location is the cell membrane. Functionally, one-heme-containing cytochrome. This Arabidopsis thaliana (Mouse-ear cress) protein is Auxin-induced in root cultures protein 12 (AIR12).